The primary structure comprises 884 residues: Protein translocase subunit SecA (884 aa).

Residues glutamine 83, 101–105 (GEGKT), and aspartate 491 contribute to the ATP site.

This sequence belongs to the SecA family.

Its subcellular location is the plastid. It localises to the chloroplast stroma. It is found in the chloroplast thylakoid membrane. The catalysed reaction is ATP + H2O + cellular proteinSide 1 = ADP + phosphate + cellular proteinSide 2.. In terms of biological role, has a central role in coupling the hydrolysis of ATP to the transfer of proteins across the thylakoid membrane. The chain is Protein translocase subunit SecA from Porphyra purpurea (Red seaweed).